The following is a 339-amino-acid chain: NADH-quinone oxidoreductase subunit H (339 aa).

9 consecutive transmembrane segments (helical) span residues 10–30 (FPLT…ILCV), 50–70 (PNVV…KLLF), 82–102 (ILFI…WAVI), 115–135 (VGVL…IIAG), 161–181 (MGLV…SGII), 187–207 (LPWW…ISVL), 235–255 (MGFA…SAMT), 275–295 (IPGF…FLWI), and 311–331 (GWKV…SVLF).

The protein belongs to the complex I subunit 1 family. As to quaternary structure, NDH-1 is composed of 14 different subunits. Subunits NuoA, H, J, K, L, M, N constitute the membrane sector of the complex.

It is found in the cell inner membrane. It carries out the reaction a quinone + NADH + 5 H(+)(in) = a quinol + NAD(+) + 4 H(+)(out). In terms of biological role, NDH-1 shuttles electrons from NADH, via FMN and iron-sulfur (Fe-S) centers, to quinones in the respiratory chain. The immediate electron acceptor for the enzyme in this species is believed to be ubiquinone. Couples the redox reaction to proton translocation (for every two electrons transferred, four hydrogen ions are translocated across the cytoplasmic membrane), and thus conserves the redox energy in a proton gradient. This subunit may bind ubiquinone. The chain is NADH-quinone oxidoreductase subunit H from Rickettsia prowazekii (strain Madrid E).